A 439-amino-acid chain; its full sequence is 23S rRNA (uracil(1939)-C(5))-methyltransferase RlmD (439 aa).

The TRAM domain maps to 1–54; the sequence is MTAPVLIESLDQEGRGVAHAEGKVIFIEGALPGEVVTYNAYRRKPSFELAQVGQ. Residues cysteine 67, cysteine 73, cysteine 76, and cysteine 155 each contribute to the [4Fe-4S] cluster site. S-adenosyl-L-methionine is bound by residues glutamine 264, phenylalanine 293, asparagine 298, glutamate 314, asparagine 342, and aspartate 363. Cysteine 391 serves as the catalytic Nucleophile.

It belongs to the class I-like SAM-binding methyltransferase superfamily. RNA M5U methyltransferase family. RlmD subfamily.

It carries out the reaction uridine(1939) in 23S rRNA + S-adenosyl-L-methionine = 5-methyluridine(1939) in 23S rRNA + S-adenosyl-L-homocysteine + H(+). Functionally, catalyzes the formation of 5-methyl-uridine at position 1939 (m5U1939) in 23S rRNA. The sequence is that of 23S rRNA (uracil(1939)-C(5))-methyltransferase RlmD from Nitrosospira multiformis (strain ATCC 25196 / NCIMB 11849 / C 71).